A 975-amino-acid polypeptide reads, in one-letter code: Glycine dehydrogenase (decarboxylating) (975 aa).

N6-(pyridoxal phosphate)lysine is present on K723.

It belongs to the GcvP family. As to quaternary structure, the glycine cleavage system is composed of four proteins: P, T, L and H. Pyridoxal 5'-phosphate serves as cofactor.

The enzyme catalyses N(6)-[(R)-lipoyl]-L-lysyl-[glycine-cleavage complex H protein] + glycine + H(+) = N(6)-[(R)-S(8)-aminomethyldihydrolipoyl]-L-lysyl-[glycine-cleavage complex H protein] + CO2. Its function is as follows. The glycine cleavage system catalyzes the degradation of glycine. The P protein binds the alpha-amino group of glycine through its pyridoxal phosphate cofactor; CO(2) is released and the remaining methylamine moiety is then transferred to the lipoamide cofactor of the H protein. The chain is Glycine dehydrogenase (decarboxylating) from Burkholderia orbicola (strain MC0-3).